The primary structure comprises 431 residues: 23S rRNA (uracil(1939)-C(5))-methyltransferase RlmD (431 aa).

In terms of domain architecture, TRAM spans 10-68; that stretch reads RVTTRQIITVKVNDLDSFGQGVARHNGKALFIPGLLPEESAEVIITEDKKQFARARVSR. 4 residues coordinate [4Fe-4S] cluster: cysteine 81, cysteine 87, cysteine 90, and cysteine 161. Residues glutamine 264, phenylalanine 293, asparagine 298, glutamate 314, asparagine 341, and aspartate 362 each contribute to the S-adenosyl-L-methionine site. Cysteine 388 (nucleophile) is an active-site residue.

The protein belongs to the class I-like SAM-binding methyltransferase superfamily. RNA M5U methyltransferase family. RlmD subfamily.

It carries out the reaction uridine(1939) in 23S rRNA + S-adenosyl-L-methionine = 5-methyluridine(1939) in 23S rRNA + S-adenosyl-L-homocysteine + H(+). Catalyzes the formation of 5-methyl-uridine at position 1939 (m5U1939) in 23S rRNA. This Salmonella paratyphi A (strain ATCC 9150 / SARB42) protein is 23S rRNA (uracil(1939)-C(5))-methyltransferase RlmD.